Consider the following 619-residue polypeptide: Zinc finger protein 668 (619 aa).

Met1 carries the post-translational modification N-acetylmethionine. Ser10 is subject to Phosphoserine. The C2H2-type 1 zinc finger occupies 22–44 (YKCLSCTKTFPNAPRAARHAATH). The interval 34 to 79 (APRAARHAATHGPADCSEEVAEVKPKPETEAKAEEASGEKVSGSAA) is disordered. Residues 54–71 (AEVKPKPETEAKAEEASG) show a composition bias toward basic and acidic residues. Glycyl lysine isopeptide (Lys-Gly) (interchain with G-Cter in SUMO2) cross-links involve residues Lys57, Lys59, Lys65, and Lys80. C2H2-type zinc fingers lie at residues 84-106 (YACP…GRSH), 112-134 (FPCP…LASH), 140-162 (FRCA…QRGH), 168-190 (YACA…RRTH), 196-218 (YSCE…ERSH), 224-246 (FLCS…QRIH), 252-274 (YRCP…ERTH), 280-302 (FLCP…QRAH), 308-330 (YHCE…RRVH), 336-358 (FKCL…ALVH), and 364-386 (FRCE…SRVH). A Glycyl lysine isopeptide (Lys-Gly) (interchain with G-Cter in SUMO2) cross-link involves residue Lys154. Residue Ser387 is modified to Phosphoserine. The segment at 392 to 414 (FHCNACGKSFVVSSSLRKHERTH) adopts a C2H2-type 13 zinc-finger fold. Residues 492 to 513 (REAPGPLEGAGEAGGEEADEKP) form a disordered region. Lys512 is covalently cross-linked (Glycyl lysine isopeptide (Lys-Gly) (interchain with G-Cter in SUMO2)). 3 C2H2-type zinc fingers span residues 516–538 (FVCR…ERSH), 544–566 (FPCT…SRTH), and 572–594 (YTCP…ERTH).

This sequence belongs to the krueppel C2H2-type zinc-finger protein family.

It is found in the nucleus. May be involved in transcriptional regulation. May play a role in DNA repair process. This is Zinc finger protein 668 (ZNF668) from Homo sapiens (Human).